We begin with the raw amino-acid sequence, 758 residues long: 5-methyltetrahydropteroyltriglutamate--homocysteine methyltransferase (758 aa).

5-methyltetrahydropteroyltri-L-glutamate is bound by residues 16-19 and Lys112; that span reads RELK. L-homocysteine-binding positions include 433 to 435 and Glu486; that span reads IGS. L-methionine contacts are provided by residues 433–435 and Glu486; that span reads IGS. 5-methyltetrahydropteroyltri-L-glutamate is bound by residues 517 to 518 and Trp563; that span reads RC. Asp601 is an L-homocysteine binding site. Asp601 serves as a coordination point for L-methionine. Residue Glu607 coordinates 5-methyltetrahydropteroyltri-L-glutamate. Zn(2+) contacts are provided by His643, Cys645, and Glu667. His696 acts as the Proton donor in catalysis. Cys728 is a Zn(2+) binding site.

This sequence belongs to the vitamin-B12 independent methionine synthase family. The cofactor is Zn(2+).

The catalysed reaction is 5-methyltetrahydropteroyltri-L-glutamate + L-homocysteine = tetrahydropteroyltri-L-glutamate + L-methionine. Its pathway is amino-acid biosynthesis; L-methionine biosynthesis via de novo pathway; L-methionine from L-homocysteine (MetE route): step 1/1. Functionally, catalyzes the transfer of a methyl group from 5-methyltetrahydrofolate to homocysteine resulting in methionine formation. This chain is 5-methyltetrahydropteroyltriglutamate--homocysteine methyltransferase, found in Neisseria meningitidis serogroup C (strain 053442).